A 156-amino-acid chain; its full sequence is 2-C-methyl-D-erythritol 2,4-cyclodiphosphate synthase (156 aa).

A divalent metal cation-binding residues include Asp10 and His12. Residues 10-12 and 36-37 each bind 4-CDP-2-C-methyl-D-erythritol 2-phosphate; these read DSH and HS. His44 is an a divalent metal cation binding site. Residues 58–60 and 63–67 contribute to the 4-CDP-2-C-methyl-D-erythritol 2-phosphate site; these read DIG and FKDTD.

The protein belongs to the IspF family. Homotrimer. A divalent metal cation is required as a cofactor.

The enzyme catalyses 4-CDP-2-C-methyl-D-erythritol 2-phosphate = 2-C-methyl-D-erythritol 2,4-cyclic diphosphate + CMP. Its pathway is isoprenoid biosynthesis; isopentenyl diphosphate biosynthesis via DXP pathway; isopentenyl diphosphate from 1-deoxy-D-xylulose 5-phosphate: step 4/6. Its function is as follows. Involved in the biosynthesis of isopentenyl diphosphate (IPP) and dimethylallyl diphosphate (DMAPP), two major building blocks of isoprenoid compounds. Catalyzes the conversion of 4-diphosphocytidyl-2-C-methyl-D-erythritol 2-phosphate (CDP-ME2P) to 2-C-methyl-D-erythritol 2,4-cyclodiphosphate (ME-CPP) with a corresponding release of cytidine 5-monophosphate (CMP). The chain is 2-C-methyl-D-erythritol 2,4-cyclodiphosphate synthase from Aquifex aeolicus (strain VF5).